The primary structure comprises 265 residues: Indole-3-glycerol phosphate synthase (265 aa).

The protein belongs to the TrpC family.

It carries out the reaction 1-(2-carboxyphenylamino)-1-deoxy-D-ribulose 5-phosphate + H(+) = (1S,2R)-1-C-(indol-3-yl)glycerol 3-phosphate + CO2 + H2O. It functions in the pathway amino-acid biosynthesis; L-tryptophan biosynthesis; L-tryptophan from chorismate: step 4/5. The protein is Indole-3-glycerol phosphate synthase of Desulforamulus reducens (strain ATCC BAA-1160 / DSM 100696 / MI-1) (Desulfotomaculum reducens).